A 264-amino-acid chain; its full sequence is Thymidylate synthase (264 aa).

Arginine 21 is a binding site for dUMP. Residue histidine 51 participates in (6R)-5,10-methylene-5,6,7,8-tetrahydrofolate binding. 126 to 127 serves as a coordination point for dUMP; sequence RR. The active-site Nucleophile is cysteine 146. Residues 166–169, asparagine 177, and 207–209 contribute to the dUMP site; these read RSAD and HLY. (6R)-5,10-methylene-5,6,7,8-tetrahydrofolate is bound at residue aspartate 169. Serine 263 contributes to the (6R)-5,10-methylene-5,6,7,8-tetrahydrofolate binding site.

Belongs to the thymidylate synthase family. Bacterial-type ThyA subfamily. As to quaternary structure, homodimer.

Its subcellular location is the cytoplasm. The enzyme catalyses dUMP + (6R)-5,10-methylene-5,6,7,8-tetrahydrofolate = 7,8-dihydrofolate + dTMP. It functions in the pathway pyrimidine metabolism; dTTP biosynthesis. Its function is as follows. Catalyzes the reductive methylation of 2'-deoxyuridine-5'-monophosphate (dUMP) to 2'-deoxythymidine-5'-monophosphate (dTMP) while utilizing 5,10-methylenetetrahydrofolate (mTHF) as the methyl donor and reductant in the reaction, yielding dihydrofolate (DHF) as a by-product. This enzymatic reaction provides an intracellular de novo source of dTMP, an essential precursor for DNA biosynthesis. The chain is Thymidylate synthase from Neisseria meningitidis serogroup B (strain ATCC BAA-335 / MC58).